The sequence spans 317 residues: Cell division protein FtsX (317 aa).

Topologically, residues 1–39 are cytoplasmic; it reads MAIVRHKQPPLRRFMMYWVDHARQAFSSLGELWRNPLAS. Residues 40-60 traverse the membrane as a helical segment; it reads LMTLAVLGVSLALPSCFHVLL. Over 61–188 the chain is Periplasmic; it reads KNAEVVEGSW…LQGIMNLLRH (128 aa). Residues 189–209 traverse the membrane as a helical segment; sequence TITGIAVLLLSAVLLIVGNTL. Residues 210–241 are Cytoplasmic-facing; the sequence is RLNILNQRSEIEVLKLVGATDAFIHRPFLYTG. The chain crosses the membrane as a helical span at residues 242-262; the sequence is IWFGVIGGMLAWWLTEVMVIW. Residues 263-280 lie on the Periplasmic side of the membrane; it reads SEGVVNELAGLYNSNFRL. Residues 281–301 form a helical membrane-spanning segment; sequence VGMGAVDGINLILLGALLGLI. The Cytoplasmic segment spans residues 302 to 317; that stretch reads ASWFSVHRHIRDIEPS.

Belongs to the ABC-4 integral membrane protein family. FtsX subfamily. In terms of assembly, forms a membrane-associated complex with FtsE.

The protein resides in the cell inner membrane. Its function is as follows. Part of the ABC transporter FtsEX involved in cellular division. Encoded in an operon consisting of genes ftsY, ftsE and ftsX. In Aeromonas hydrophila, this protein is Cell division protein FtsX.